We begin with the raw amino-acid sequence, 338 residues long: tRNA N6-adenosine threonylcarbamoyltransferase (338 aa).

Fe cation is bound by residues His-111 and His-115. Substrate is bound by residues 134–138, Asp-167, Gly-180, Asp-184, and Asn-272; that span reads VVSGG. A Fe cation-binding site is contributed by Asp-300.

Belongs to the KAE1 / TsaD family. It depends on Fe(2+) as a cofactor.

It is found in the cytoplasm. The enzyme catalyses L-threonylcarbamoyladenylate + adenosine(37) in tRNA = N(6)-L-threonylcarbamoyladenosine(37) in tRNA + AMP + H(+). Functionally, required for the formation of a threonylcarbamoyl group on adenosine at position 37 (t(6)A37) in tRNAs that read codons beginning with adenine. Is involved in the transfer of the threonylcarbamoyl moiety of threonylcarbamoyl-AMP (TC-AMP) to the N6 group of A37, together with TsaE and TsaB. TsaD likely plays a direct catalytic role in this reaction. This is tRNA N6-adenosine threonylcarbamoyltransferase from Syntrophus aciditrophicus (strain SB).